Here is a 113-residue protein sequence, read N- to C-terminus: Nucleoid-associated protein THA_1374 (113 aa).

It belongs to the YbaB/EbfC family. Homodimer.

It is found in the cytoplasm. It localises to the nucleoid. In terms of biological role, binds to DNA and alters its conformation. May be involved in regulation of gene expression, nucleoid organization and DNA protection. The chain is Nucleoid-associated protein THA_1374 from Thermosipho africanus (strain TCF52B).